The chain runs to 154 residues: Transcriptional repressor NrdR (154 aa).

A zinc finger spans residues 3-34 (CPFCRHPDSRVVDSRETDEGQAIRRRRSCPEC). The ATP-cone domain occupies 46-136 (LAVVKRSGVT…VYRSFSSAED (91 aa)).

The protein belongs to the NrdR family. Requires Zn(2+) as cofactor.

Its function is as follows. Negatively regulates transcription of bacterial ribonucleotide reductase nrd genes and operons by binding to NrdR-boxes. This chain is Transcriptional repressor NrdR, found in Mycolicibacterium gilvum (strain PYR-GCK) (Mycobacterium gilvum (strain PYR-GCK)).